Consider the following 103-residue polypeptide: MLKPSIDTLLDKVPSKYSLVILEAKRAHELEAGAPATQGFKSEKSTLRALEEIESGNVTIHPDPEGKREAVRRRIEEEKRRKEEEEKKIKEQIAKEKEDGEKI.

A disordered region spans residues 52 to 103; that stretch reads EIESGNVTIHPDPEGKREAVRRRIEEEKRRKEEEEKKIKEQIAKEKEDGEKI. The span at 62-103 shows a compositional bias: basic and acidic residues; the sequence is PDPEGKREAVRRRIEEEKRRKEEEEKKIKEQIAKEKEDGEKI.

The protein belongs to the RNA polymerase subunit omega family. As to quaternary structure, the RNAP catalytic core consists of 2 alpha, 1 beta, 1 beta' and 1 omega subunit. When a sigma factor is associated with the core the holoenzyme is formed, which can initiate transcription.

The catalysed reaction is RNA(n) + a ribonucleoside 5'-triphosphate = RNA(n+1) + diphosphate. Promotes RNA polymerase assembly. Latches the N- and C-terminal regions of the beta' subunit thereby facilitating its interaction with the beta and alpha subunits. The protein is DNA-directed RNA polymerase subunit omega of Streptococcus pneumoniae serotype 19F (strain G54).